The following is a 330-amino-acid chain: Polyprenyl transferase dpfgC (330 aa).

An N-linked (GlcNAc...) asparagine glycan is attached at Asn34. 7 helical membrane-spanning segments follow: residues 105 to 125 (ALCVLAAYLFCGAGMVWNDWI), 146 to 166 (VTTTEAMVWMTLQVIMSWGVL), 175 to 192 (VLKHLIPVMVASVLYPFG), 199 to 219 (KLMIYPQYILAFTIAWPAIPG), 237 to 257 (CLPLCIMVFFWTIYLNTAYSY), 273 to 293 (NIAGNHIHVLLVLLVSPIILA), and 310 to 330 (NFILGVWTILACAAEVFLTSA).

The protein belongs to the UbiA prenyltransferase family. Mg(2+) is required as a cofactor.

Its subcellular location is the membrane. It participates in secondary metabolite biosynthesis; terpenoid biosynthesis. Functionally, polyprenyl transferase; part of the gene cluster that mediates the biosynthesis of diterpenoid pyrones. The first step of the pathway is the synthesis of the alpha-pyrone moiety by the polyketide synthase dpfgA via condensation of one acetyl-CoA starter unit with 3 malonyl-CoA units and 2 methylations. The alpha-pyrone is then combined with geranylgeranyl pyrophosphate (GGPP) formed by the GGPP synthase dpfgD through the action of the prenyltransferase dpfgC to yield a linear alpha-pyrone diterpenoid. Subsequent steps in the diterpenoid pyrone biosynthetic pathway involve the decalin core formation, which is initiated by the epoxidation of the C10-C11 olefin by the FAD-dependent oxidoreductase dpfgE, and is followed by a cyclization cascade catalyzed by the terpene cyclase dpfgB. The short chain dehydrogenase/reductase dpfgG then oxidizes the 8S hydroxy group to a ketone and the short chain dehydrogenase/reductase dpfgH reduces the ketone to the 8R hydroxy group to yield higginsianin B. Higginsianin B is further methylated by the methyltransferase dpfgI to produce the intermediate named FDDP B. The cytochrome P450 monooxygenase dfgpJ then catalyzes a three-step oxidation at C-27 to generate a carboxylic acid as well as C-26 hydroxylation. Finally, methyltransferase dpfgK methylates the carboxylic acid generated by dpfgJ, yielding the final diterpenoid pyrones from the pathway which were named FDDP D and FDDP E. The chain is Polyprenyl transferase dpfgC from Gibberella zeae (strain ATCC MYA-4620 / CBS 123657 / FGSC 9075 / NRRL 31084 / PH-1) (Wheat head blight fungus).